A 447-amino-acid chain; its full sequence is Phosphoglucosamine mutase (447 aa).

Residue S100 is the Phosphoserine intermediate of the active site. S100, D239, D241, and D243 together coordinate Mg(2+). Phosphoserine is present on S100.

It belongs to the phosphohexose mutase family. Requires Mg(2+) as cofactor. Activated by phosphorylation.

It carries out the reaction alpha-D-glucosamine 1-phosphate = D-glucosamine 6-phosphate. Catalyzes the conversion of glucosamine-6-phosphate to glucosamine-1-phosphate. This is Phosphoglucosamine mutase from Caldanaerobacter subterraneus subsp. tengcongensis (strain DSM 15242 / JCM 11007 / NBRC 100824 / MB4) (Thermoanaerobacter tengcongensis).